The following is a 397-amino-acid chain: Elongation factor Tu (397 aa).

One can recognise a tr-type G domain in the interval 10 to 207 (KPHVNIGTIG…VLDEYVKEPV (198 aa)). Residues 19–26 (GHIDHGKT) are G1. Position 19-26 (19-26 (GHIDHGKT)) interacts with GTP. Position 26 (threonine 26) interacts with Mg(2+). Positions 60 to 64 (GITIS) are G2. Positions 81-84 (DCPG) are G3. GTP contacts are provided by residues 81–85 (DCPGH) and 136–139 (NKCD). The segment at 136 to 139 (NKCD) is G4. The segment at 174 to 176 (SAL) is G5.

This sequence belongs to the TRAFAC class translation factor GTPase superfamily. Classic translation factor GTPase family. EF-Tu/EF-1A subfamily. Monomer.

It localises to the cytoplasm. The enzyme catalyses GTP + H2O = GDP + phosphate + H(+). Its function is as follows. GTP hydrolase that promotes the GTP-dependent binding of aminoacyl-tRNA to the A-site of ribosomes during protein biosynthesis. In Desulforapulum autotrophicum (strain ATCC 43914 / DSM 3382 / VKM B-1955 / HRM2) (Desulfobacterium autotrophicum), this protein is Elongation factor Tu.